Here is a 154-residue protein sequence, read N- to C-terminus: Ascorbate-specific PTS system EIIA component (154 aa).

Positions 6 to 150 (SLAENKSIRL…QEVLDLIDRT (145 aa)) constitute a PTS EIIA type-2 domain. The Tele-phosphohistidine intermediate role is filled by histidine 68. A Phosphohistidine modification is found at histidine 68.

The protein localises to the cytoplasm. Functionally, the phosphoenolpyruvate-dependent sugar phosphotransferase system (sugar PTS), a major carbohydrate active transport system, catalyzes the phosphorylation of incoming sugar substrates concomitantly with their translocation across the cell membrane. The enzyme II UlaABC PTS system is involved in ascorbate transport. The polypeptide is Ascorbate-specific PTS system EIIA component (ulaC) (Shigella boydii serotype 4 (strain Sb227)).